Reading from the N-terminus, the 785-residue chain is Phenylalanine--tRNA ligase beta subunit (785 aa).

Residues 39-150 (RTWAAGVVVG…ASLPLGLDVG (112 aa)) form the tRNA-binding domain. Positions 400-476 (RENRVVSLRP…RVVGYDRFAP (77 aa)) constitute a B5 domain. The Mg(2+) site is built by Asp454, Asp460, Glu463, and Glu464. In terms of domain architecture, FDX-ACB spans 692-784 (SPFPPAARDL…LAERYSVDLR (93 aa)).

The protein belongs to the phenylalanyl-tRNA synthetase beta subunit family. Type 1 subfamily. In terms of assembly, tetramer of two alpha and two beta subunits. Mg(2+) is required as a cofactor.

Its subcellular location is the cytoplasm. It carries out the reaction tRNA(Phe) + L-phenylalanine + ATP = L-phenylalanyl-tRNA(Phe) + AMP + diphosphate + H(+). The sequence is that of Phenylalanine--tRNA ligase beta subunit from Gloeobacter violaceus (strain ATCC 29082 / PCC 7421).